The sequence spans 247 residues: Cell division protein ZapD (247 aa).

Belongs to the ZapD family. As to quaternary structure, interacts with FtsZ.

The protein resides in the cytoplasm. Its function is as follows. Cell division factor that enhances FtsZ-ring assembly. Directly interacts with FtsZ and promotes bundling of FtsZ protofilaments, with a reduction in FtsZ GTPase activity. This is Cell division protein ZapD from Enterobacter sp. (strain 638).